A 241-amino-acid chain; its full sequence is ATP-dependent Clp protease ATP-binding subunit CLPT2, chloroplastic (241 aa).

The transit peptide at 1–75 (MAAHSSCNFA…PRRIHKSAIS (75 aa)) directs the protein to the chloroplast. A Clp R domain is found at 91–237 (KPKWSWRAIK…ELESFASESG (147 aa)). Repeat stretches follow at residues 94 to 159 (WSWR…LGKA) and 171 to 237 (LTED…SESG).

The protein belongs to the ClpA/ClpB family. As to quaternary structure, monomer and homodimer. The dimers monomerize before association to the P-ring. Component of the chloroplastic Clp protease core complex which consist of at least 16 proteins: CLPP4 (3 copies), CLPP5 (3 copies), CLPR4 (2 copies), ClpP1 (1 copy), CLPP6 (1 copy), CLPR2 (1 copy), CLPT1 (1 copy), CLPT2 (1 copy) and 3 copies of CLPP3 and/or CLPR1 and/or CLPR3. Interacts with AHK2. Interacts with CPN21. No interactions with CLPS1.

It is found in the plastid. The protein resides in the chloroplast. Its function is as follows. Accessory protein regulating the assembly of the plastidial Clp protease system. CLPT1 first binds to the heptameric P-ring containing the CLP3-6 subunits followed by CLPT2, and only then does the P-ring combine with the R-ring composed of the clpP1 and CLPR1-4 subunits. Once the core complex is fully assembled, it then associates to the CLPC chaperone partner to form the functional protease. CLPT2 and CLPT1 are partially redundant. In Arabidopsis thaliana (Mouse-ear cress), this protein is ATP-dependent Clp protease ATP-binding subunit CLPT2, chloroplastic.